A 433-amino-acid chain; its full sequence is Ribosomal protein uS12 methylthiotransferase RimO (433 aa).

One can recognise an MTTase N-terminal domain in the interval 9–124 (NKINVITLGC…LLKALGADYR (116 aa)). Residues Cys-18, Cys-53, Cys-87, Cys-148, Cys-152, and Cys-155 each contribute to the [4Fe-4S] cluster site. Residues 134–364 (TTPKNYAYLK…MDLQSQISWD (231 aa)) enclose the Radical SAM core domain. Positions 367 to 433 (QEKLGQTFRC…TEFDLYGEPA (67 aa)) constitute a TRAM domain.

This sequence belongs to the methylthiotransferase family. RimO subfamily. [4Fe-4S] cluster serves as cofactor.

It is found in the cytoplasm. It carries out the reaction L-aspartate(89)-[ribosomal protein uS12]-hydrogen + (sulfur carrier)-SH + AH2 + 2 S-adenosyl-L-methionine = 3-methylsulfanyl-L-aspartate(89)-[ribosomal protein uS12]-hydrogen + (sulfur carrier)-H + 5'-deoxyadenosine + L-methionine + A + S-adenosyl-L-homocysteine + 2 H(+). Catalyzes the methylthiolation of an aspartic acid residue of ribosomal protein uS12. The sequence is that of Ribosomal protein uS12 methylthiotransferase RimO from Flavobacterium psychrophilum (strain ATCC 49511 / DSM 21280 / CIP 103535 / JIP02/86).